Here is a 287-residue protein sequence, read N- to C-terminus: Glycine--tRNA ligase alpha subunit (287 aa).

Belongs to the class-II aminoacyl-tRNA synthetase family. As to quaternary structure, tetramer of two alpha and two beta subunits.

The protein resides in the cytoplasm. It catalyses the reaction tRNA(Gly) + glycine + ATP = glycyl-tRNA(Gly) + AMP + diphosphate. This is Glycine--tRNA ligase alpha subunit from Petrotoga mobilis (strain DSM 10674 / SJ95).